A 156-amino-acid polypeptide reads, in one-letter code: MRCPFCGSMDTRVLDSRPTLDGAAIRRRRECISCGRRFTTYERYEEAPVLVIKKDGRREKFDRNKIKNGMIKACEKRPVTYDQIEEAVNRICLKLREEGLFEVETKKIGELVMEELKKLDQVAYVRFASVYRDFREVDQFLEIVKELKREKEGEGK.

A zinc finger spans residues C3–C34. In terms of domain architecture, ATP-cone spans V49–Q139.

This sequence belongs to the NrdR family. It depends on Zn(2+) as a cofactor.

Negatively regulates transcription of bacterial ribonucleotide reductase nrd genes and operons by binding to NrdR-boxes. The sequence is that of Transcriptional repressor NrdR from Thermotoga neapolitana (strain ATCC 49049 / DSM 4359 / NBRC 107923 / NS-E).